The sequence spans 108 residues: uncharacterized protein (108 aa).

3 cysteine pairs are disulfide-bonded: Cys44-Cys82, Cys60-Cys78, and Cys63-Cys91.

The protein belongs to the arthropod CHH/MIH/GIH/VIH hormone family.

This is an uncharacterized protein from Caenorhabditis elegans.